A 310-amino-acid chain; its full sequence is Calbindin-32 (310 aa).

6 EF-hand domains span residues 35 to 70 (LSAN…FVSS), 84 to 120 (TMLE…EENF), 131 to 166 (ESSV…LLKE), 177 to 212 (KLIE…KENF), 224 to 259 (LTKE…LLEL), and 283 to 304 (TDKH…LAKI). 25 residues coordinate Ca(2+): aspartate 48, aspartate 50, asparagine 52, tyrosine 54, glutamate 59, aspartate 98, asparagine 100, aspartate 102, lysine 104, glutamate 109, aspartate 144, aspartate 146, serine 148, tyrosine 150, glutamate 155, aspartate 190, asparagine 192, aspartate 194, arginine 196, glutamate 201, aspartate 237, aspartate 239, serine 241, threonine 243, and glutamate 248.

It belongs to the calbindin family. As to expression, expressed in a large number of neuron of the brain and the thoracic ganglion as well as in two small muscles of the thorax.

The chain is Calbindin-32 (Cbp53E) from Drosophila melanogaster (Fruit fly).